The primary structure comprises 1622 residues: DNA (cytosine-5)-methyltransferase 1 (1622 aa).

Residues 1 to 145 form an interaction with DNMT3A region; sequence MPARTAPARV…RRSKSDSETM (145 aa). Interaction with the PRC2/EED-EZH2 complex stretches follow at residues 1–342 and 304–610; these read MPAR…VERK and TPEP…TVIN. A Phosphoserine modification is found at Ser15. The DMAP1-binding domain maps to 16–109; that stretch reads PAGSLPDHVR…TQKANGCPAN (94 aa). Lys70 carries the post-translational modification N6,N6-dimethyllysine; by EHMT2. The segment at 100–360 is disordered; that stretch reads TQKANGCPAN…IPKLNPPQCP (261 aa). Residues 126-137 are compositionally biased toward basic residues; it reads PRSRPKPRGPRR. Residue Ser138 is modified to Phosphoserine. Lys139 bears the N6-methyllysine; by SETD7 mark. Ser140 carries the post-translational modification Phosphoserine; by PKB/AKT1. The interval 146 to 213 is interaction with DNMT3B; the sequence is IEASSSSVAT…TESRASRAGE (68 aa). Ser149 and Ser151 each carry phosphoserine. Residues 149-166 show a composition bias toward low complexity; the sequence is SSSSVATRRTTRQTTITS. The residue at position 163 (Thr163) is a Phosphothreonine. Lys169 carries the N6-acetyllysine modification. Residues 173–200 carry the Nuclear localization signal motif; sequence KRKPKEDSEKGNANESAAEERDQDKKRR. Basic and acidic residues-rich tracts occupy residues 176 to 197, 207 to 222, 237 to 269, and 276 to 300; these read PKEDSEKGNANESAAEERDQDK, RASRAGESVEKPERVR, DDRRPRRQTRELASRRKSREDPDREARPGTHLD, and KDKRSSRPRSQPRDLATKRRPKEEV. Thr304 is subject to Phosphothreonine. The DNA replication foci-targeting sequence stretch occupies residues 327-556; sequence KPEPLSIPVQ…NVNRFTEDSL (230 aa). Zn(2+) is bound by residues Cys359 and Cys362. Residue Lys372 is modified to N6-acetyllysine. Ser400 carries the post-translational modification Phosphoserine. Residues Cys420 and His424 each coordinate Zn(2+). A phosphoserine mark is found at Ser515 and Ser555. The segment at 650–696 adopts a CXXC-type zinc-finger fold; it reads NTMKRRRCGVCEVCQQPECGKCKACKDMVKFGGTGRSKQACLKRRCP. Zn(2+) is bound by residues Cys657, Cys660, Cys663, Cys668, Cys671, Cys674, Cys690, and Cys695. The tract at residues 697–758 is autoinhibitory linker; it reads NLAVKEADED…TYYWKVSIDE (62 aa). Positions 702 to 733 are disordered; sequence EADEDEEADDDIPELPSPKKLHQGKKKKQNKD. Residues 703-714 are compositionally biased toward acidic residues; it reads ADEDEEADDDIP. A Phosphoserine modification is found at Ser718. The span at 720 to 731 shows a compositional bias: basic residues; sequence KKLHQGKKKKQN. Ser736 carries the post-translational modification Phosphoserine. Lys753 is subject to N6-acetyllysine. The BAH 1 domain occupies 759 to 884; it reads ETLEVGDCVS…QDYARFESPP (126 aa). The residue at position 882 (Ser882) is a Phosphoserine. Residues Lys895, Lys961, and Lys980 each carry the N6-acetyllysine modification. In terms of domain architecture, BAH 2 spans 977–1105; that stretch reads TYRKYSDYIK…SKTKSFEDPP (129 aa). Positions 1099–1138 are disordered; it reads KSFEDPPNHARSPGNKGKGKGKGKGKGKPQVSEPKEPEAA. A run of 6 repeats spans residues 1114–1115, 1116–1117, 1118–1119, 1120–1121, 1122–1123, and 1124–1125. Positions 1114-1127 are 7 X 2 AA tandem repeats of K-G; sequence KGKGKGKGKGKGKP. Basic residues predominate over residues 1115–1125; it reads GKGKGKGKGKG. Lys1116, Lys1118, Lys1120, Lys1122, Lys1124, and Lys1126 each carry N6-acetyllysine. The 7; approximate repeat unit spans residues 1126 to 1127; it reads KP. The tract at residues 1126-1622 is interaction with the PRC2/EED-EZH2 complex; it reads KPQVSEPKEP…KGKEETTTED (497 aa). Positions 1144-1603 constitute an SAM-dependent MTase C5-type domain; the sequence is LRTLDVFSGC…LEIKLCLLAS (460 aa). The tract at residues 1144–1622 is catalytic; the sequence is LRTLDVFSGC…KGKEETTTED (479 aa). S-adenosyl-L-methionine-binding positions include Ser1151, 1155–1156, 1173–1174, 1195–1196, and Cys1196; these read GL, EM, and DC. Cys1231 is an active-site residue. At Lys1354 the chain carries N6-acetyllysine. Ser1436 is modified (phosphoserine). Residues Asn1582 and Val1584 each contribute to the S-adenosyl-L-methionine site. Lys1613 participates in a covalent cross-link: Glycyl lysine isopeptide (Lys-Gly) (interchain with G-Cter in SUMO2).

This sequence belongs to the class I-like SAM-binding methyltransferase superfamily. C5-methyltransferase family. In terms of assembly, homodimer. Forms a stable complex with E2F1, BB1 and HDAC1. Forms a complex with DMAP1 and HDAC2, with direct interaction. Interacts with the PRC2/EED-EZH2 complex. Probably part of a corepressor complex containing ZNF304, TRIM28, SETDB1 and DNMT1. Interacts with UHRF1; promoting its recruitment to hemimethylated DNA. Interacts with USP7, promoting its deubiquitination. Interacts with PCNA. Interacts with MBD2 and MBD3. Interacts with DNMT3A and DNMT3B. Interacts with UBC9. Interacts with CSNK1D. Interacts with HDAC1. Interacts with BAZ2A/TIP5. Interacts with SIRT7. Interacts with ZNF263; recruited to the SIX3 promoter along with other proteins involved in chromatin modification and transcriptional corepression where it contributes to transcriptional repression. Interacts with L3MBTL3 and DCAF5; the interaction requires DNMT1 methylation at Lys-139 and is necessary to target DNMT1 for ubiquitination by the CRL4-DCAF5 E3 ubiquitin ligase complex and proteasomal degradation. Interacts with PHF20L1; the interaction requires DNMT1 methylation at Lys-139 and protects DNMT1 from ubiquitination and proteasomal degradation. In terms of processing, sumoylated; sumoylation increases activity. Post-translationally, acetylation on multiple lysines, mainly by KAT2B/PCAF, regulates cell cycle G(2)/M transition. Deacetylation of Lys-1116 and Lys-1354 by SIRT1 increases methyltransferase activity. Phosphorylation of Ser-151 by CDKs is important for enzymatic activity and protein stability. Phosphorylation of Ser-140 by AKT1 prevents methylation by SETD7 thereby increasing DNMT1 stability. In terms of processing, methylation at Lys-139 by SETD7 is necessary for the regulation of DNMT1 proteasomal degradation. Post-translationally, ubiquitinated by UHRF1; interaction with USP7 counteracts ubiquitination by UHRF1 by promoting deubiquitination and preventing degradation by the proteasome. In terms of tissue distribution, isoforms 0 and 8 are highly expressed in placenta, brain, lung, spleen, kidney, heart, and at much lower levels in liver. Isoform 1 is expressed in cerebellum, isoform 2 in muscle and testis, isoform 3 in lung, isoform 4 in spleen and brain, and isoform 5 in brain.

It localises to the nucleus. It carries out the reaction a 2'-deoxycytidine in DNA + S-adenosyl-L-methionine = a 5-methyl-2'-deoxycytidine in DNA + S-adenosyl-L-homocysteine + H(+). Its function is as follows. Methylates CpG residues. Preferentially methylates hemimethylated DNA. Associates with DNA replication sites in S phase maintaining the methylation pattern in the newly synthesized strand, that is essential for epigenetic inheritance. Associates with chromatin during G2 and M phases to maintain DNA methylation independently of replication. It is responsible for maintaining methylation patterns established in development. DNA methylation is coordinated with methylation of histones. Mediates transcriptional repression by direct binding to HDAC2. In association with DNMT3B and via the recruitment of CTCFL/BORIS, involved in activation of BAG1 gene expression by modulating dimethylation of promoter histone H3 at H3K4 and H3K9. Probably forms a corepressor complex required for activated KRAS-mediated promoter hypermethylation and transcriptional silencing of tumor suppressor genes (TSGs) or other tumor-related genes in colorectal cancer (CRC) cells. Also required to maintain a transcriptionally repressive state of genes in undifferentiated embryonic stem cells (ESCs). Associates at promoter regions of tumor suppressor genes (TSGs) leading to their gene silencing. Promotes tumor growth. The sequence is that of DNA (cytosine-5)-methyltransferase 1 (Dnmt1) from Rattus norvegicus (Rat).